Reading from the N-terminus, the 797-residue chain is GDH/6PGL endoplasmic bifunctional protein (797 aa).

The N-terminal stretch at 1-24 (MKCPGVWGMLTVTMCVVFLGCPQA) is a signal peptide. Pyrrolidone carboxylic acid is present on Q25. The segment at 25 to 531 (QELQGHVSVI…SGSHLSFSLG (507 aa)) is hexose-6-phosphate dehydrogenase. NADP(+)-binding positions include 37-44 (GATGDLAK) and Y154. N-linked (GlcNAc...) asparagine glycosylation occurs at N162. Position 179 (K179) interacts with NADP(+). D-glucose 6-phosphate is bound by residues K179, 209–213 (HYLGK), E248, and D267. The residue at position 213 (K213) is an N6-succinyllysine. H272 serves as the catalytic Proton acceptor. N287 carries N-linked (GlcNAc...) asparagine glycosylation. D-glucose 6-phosphate is bound by residues K365 and R370. Position 375 (R375) interacts with NADP(+). The interval 532 to 545 (QPEQLVPGPGSTPR) is linker. Positions 546–797 (PSDFQVLGAK…WYMDYEAFLG (252 aa)) are 6-phosphogluconolactonase. W623 is a binding site for NADP(+). The N-linked (GlcNAc...) asparagine glycan is linked to N689.

In the N-terminal section; belongs to the glucose-6-phosphate dehydrogenase family. It in the C-terminal section; belongs to the glucosamine/galactosamine-6-phosphate isomerase family. 6-phosphogluconolactonase subfamily. In terms of assembly, homodimer.

Its subcellular location is the endoplasmic reticulum lumen. It carries out the reaction D-glucose 6-phosphate + NAD(+) = 6-phospho-D-glucono-1,5-lactone + NADH + H(+). The enzyme catalyses D-glucose 6-phosphate + NADP(+) = 6-phospho-D-glucono-1,5-lactone + NADPH + H(+). It catalyses the reaction 6-phospho-D-glucono-1,5-lactone + H2O = 6-phospho-D-gluconate + H(+). The catalysed reaction is 2-deoxy-D-glucose 6-phosphate + NAD(+) = 2-deoxy-6-phospho-D-glucono-1,5-lactone + NADH + H(+). It carries out the reaction 2-deoxy-D-glucose 6-phosphate + NADP(+) = 2-deoxy-6-phospho-D-glucono-1,5-lactone + NADPH + H(+). The enzyme catalyses D-galactose 6-phosphate + NADP(+) = 6-phospho-D-galactono-1,5-lactone + NADPH + H(+). It catalyses the reaction D-galactose 6-phosphate + NAD(+) = 6-phospho-D-galactono-1,5-lactone + NADH + H(+). The catalysed reaction is D-glucosamine 6-phosphate + NADP(+) = 2-amino-2-deoxy-6-phospho-D-glucono-1,5-lactone + NADPH + 2 H(+). It carries out the reaction D-glucose + NAD(+) = D-glucono-1,5-lactone + NADH + H(+). The enzyme catalyses D-glucose + NADP(+) = D-glucono-1,5-lactone + NADPH + H(+). It catalyses the reaction D-glucose 6-sulfate + NADP(+) = 6-sulfo-D-glucono-1,5-lactone + NADPH + H(+). Its pathway is carbohydrate degradation; pentose phosphate pathway; D-ribulose 5-phosphate from D-glucose 6-phosphate (oxidative stage). The protein operates within carbohydrate degradation; pentose phosphate pathway; D-ribulose 5-phosphate from D-glucose 6-phosphate (oxidative stage): step 2/3. Its function is as follows. Bifunctional enzyme localized in the lumen of the endoplasmic reticulum that catalyzes the first two steps of the oxidative branch of the pentose phosphate pathway/shunt, an alternative to glycolysis and a major source of reducing power and metabolic intermediates for biosynthetic processes. Has a hexose-6-phosphate dehydrogenase activity, with broad substrate specificity compared to glucose-6-phosphate 1-dehydrogenase/G6PD, and catalyzes the first step of the pentose phosphate pathway. In addition, acts as a 6-phosphogluconolactonase and catalyzes the second step of the pentose phosphate pathway. May have a dehydrogenase activity for alternative substrates including glucosamine 6-phosphate and glucose 6-sulfate. The main function of this enzyme is to provide reducing equivalents such as NADPH to maintain the adequate levels of reductive cofactors in the oxidizing environment of the endoplasmic reticulum. By producing NADPH that is needed by reductases of the lumen of the endoplasmic reticulum like corticosteroid 11-beta-dehydrogenase isozyme 1/HSD11B1, indirectly regulates their activity. The polypeptide is GDH/6PGL endoplasmic bifunctional protein (Oryctolagus cuniculus (Rabbit)).